The chain runs to 286 residues: Haloalkane dehalogenase 2 (286 aa).

One can recognise an AB hydrolase-1 domain in the interval 35–134 (PPILLCHGNP…RVRGVVLGNT (100 aa)). Residue aspartate 109 is the Nucleophile of the active site. Aspartate 238 functions as the Proton donor in the catalytic mechanism. Histidine 267 functions as the Proton acceptor in the catalytic mechanism.

This sequence belongs to the haloalkane dehalogenase family. Type 1 subfamily. As to quaternary structure, monomer.

The enzyme catalyses 1-haloalkane + H2O = a halide anion + a primary alcohol + H(+). Catalyzes hydrolytic cleavage of carbon-halogen bonds in halogenated aliphatic compounds, leading to the formation of the corresponding primary alcohols, halide ions and protons. The protein is Haloalkane dehalogenase 2 (dhmA2) of Mycobacterium bovis (strain ATCC BAA-935 / AF2122/97).